The sequence spans 410 residues: Na(+)-translocating NADH-quinone reductase subunit B (410 aa).

3 consecutive transmembrane segments (helical) span residues 56-76 (MMIL…YNVG), 119-139 (LFGA…GGFW), and 159-179 (SILF…ALGI). Residue T232 is modified to FMN phosphoryl threonine. The next 5 membrane-spanning stretches (helical) occupy residues 266 to 286 (GSIG…IVFA), 293 to 313 (IIAG…FIGS), 318 to 338 (MFAM…GMLF), 347 to 367 (SFTN…CVLI), and 377 to 397 (GMML…YFVA).

The protein belongs to the NqrB/RnfD family. Composed of six subunits; NqrA, NqrB, NqrC, NqrD, NqrE and NqrF. FMN serves as cofactor.

The protein localises to the cell inner membrane. The catalysed reaction is a ubiquinone + n Na(+)(in) + NADH + H(+) = a ubiquinol + n Na(+)(out) + NAD(+). NQR complex catalyzes the reduction of ubiquinone-1 to ubiquinol by two successive reactions, coupled with the transport of Na(+) ions from the cytoplasm to the periplasm. NqrA to NqrE are probably involved in the second step, the conversion of ubisemiquinone to ubiquinol. In Neisseria meningitidis serogroup B (strain ATCC BAA-335 / MC58), this protein is Na(+)-translocating NADH-quinone reductase subunit B.